We begin with the raw amino-acid sequence, 349 residues long: MEQVQVTALLDHIPKVHWAPLRGIPLKRRLQTSAIVTWLALLPICLIIYLYLFTIPLLWPILIMYTIWLFFDKAPENGGRRISLVRKLPLWKHFANYFPVTLIKEGDLDPKGNYIMSYHPHGIISMAAFANFATEATGFSEQYPGIVPSLLTLASNFRLPLYRDFMMSLGMCSVSRHSCEAILRSGPGRSIVIVTGGASESLSARPGTNDLTLKKRLGFIRLAIRNGASLVPIFSFGENDIYEQYDNKKGSLIWRYQKWFQKITGFTVPLAHARGIFNYNAGFIPFRHPIVTVVGKPIAVPLLAEGETEPSEEQMHQVQAQYIESLQAIYDKYKDIYAKDRIKDMTMIA.

2 helical membrane passes run 44–64 and 114–134; these read ICLIIYLYLFTIPLLWPILIM and YIMSYHPHGIISMAAFANFAT.

Belongs to the diacylglycerol acyltransferase family.

It is found in the endoplasmic reticulum membrane. It carries out the reaction an acyl-CoA + a 1,2-diacyl-sn-glycerol = a triacyl-sn-glycerol + CoA. It functions in the pathway glycerolipid metabolism; triacylglycerol biosynthesis. Catalyzes the terminal and only committed step in triacylglycerol synthesis by using diacylglycerol and fatty acyl CoA as substrates. Required for storage lipid synthesis. The polypeptide is Diacylglycerol O-acyltransferase 2B (DGAT2B) (Umbelopsis ramanniana (Oleaginous fungus)).